A 1452-amino-acid polypeptide reads, in one-letter code: MVKPDIHTLAHHLKQERLYVNSEKQLIQRLNADLLKTAERLYRTSWIAKQQRINLDRLILTSAEASPAECCQHAKVLEDTQFVDGYKQLGFQETAYGEFLNLLRENPRLIASCLVTGEKLNQENAQSVIHTVFTSLYGNCIMQEDESYLLQVLRYLIEFELKESDNPRRLLRKGTCAFSIIFKLFSEGLFSAKLFLTATLHEPIMQLLVEDEDHLETDPAKLIERFSPAQQEKLFGGKGTEAFRQRVQAMVETNEAKLVALVNKFIGYLKQNTYCFPHSLRWIVSQMFKTLSCVEGLEVSEVRSMCTDLLLTCFICPAIVNPEQYGIISDAPINEVARFNLMQVGRLLQQLALTGFEERDSRNKSNLNKFDKSCVAAFLDVVIGGRAVETPPLSSVNLLEGLSRTVVYMTYSQLMSLLGFMRTVISSEQLQEEDRMALENLLATVPQTKPGKSNNDTPYSTPQLSPATTPACKKNRLPIVTRSRSKTNLMETENECSPQEVTPNQPEEVLVISLGTGPQLTPGMMSENEVLNMQLVDGGQGDVPVDESKLHGKPDKTLRFSLCSDNLEGISEEEENPCSTGPSNRSNSVSSLDLEGESVSELGGGPSGSNGVEALQLLEHEQATTQDNLDDKLRKFEIRDMMGLTDDRDISETVSETWSTDVLGSDFDPNIDEDRLQEIAGAAAENMLGSLLCLPGSLLLDPCTISETTSEAWSVEVLPSDSAPDLKQEERLHELESCSGLGSTSDDTEVREVSSRPSTPGLSVVSGISATSEDIPNKTEDLRSECSSDFGGKDSVTSPEAEESVHGPHHITTPPTQSESLLAMFDPLAPASSEVVRPKVHYARPSHPPPDPPVLEGASGGNEARLPMFCSHVFIHTDSEAYRQRHSCPERLVRSRSSDIASSIRRPISDPGWVRRGINEDRELLTGTAVNALINPPQSSSFSPSKDSSRGEPDEKKDSDDERSDRNKPWWKKRFVSAMPKAPIPFRKKEKQEKEREDFVQDRFYVAVDSTSQLGPHSQAAEDILAKYRNAIKRTIPNEGSTMPYEGADPVGDGESLHESPRDEALQNMTSDDLLDSANQVAHPQESAFSYRDAKKKLRLALCSADSVAFPVLSHSTRNGLPDHTDPEDNEIVCFLKVQLAEAINLQDKNLMAQIQETMRCVSRFDSRSCSKILSSLAEDYRKRASYIAYLTRCRQGLQSTQAHLDRLLQRVLRDKEVSTRYFTTVCVRLLLESKENEIHEFIQDFQKLTAADDKTAQVEEFLQSLYGAMAQDVIWQNASEEQLQDAQIAIERSIMNRIFKLAFNPNQDADILRDQVLHEHIKRLSKVVTANHRALQIPEVYLREAPWPSAQTEIRTISAYKTPRDKVQCILRMCSTIMNLLSLANEYSVPGADDFVPVLVFVLIKANPTYLLSTVQYISSFYSNRLIGEESYWWMQFTAAVEFIKTIDDRK.

The 239-residue stretch at 147–385 folds into the Ras-GAP domain; sequence SYLLQVLRYL…AAFLDVVIGG (239 aa). 2 stretches are compositionally biased toward polar residues: residues 445–468 and 577–587; these read VPQT…SPAT and PCSTGPSNRSN. Disordered regions lie at residues 445 to 471, 571 to 611, 735 to 816, 885 to 912, 929 to 974, and 1037 to 1063; these read VPQT…TTPA, SEEE…GSNG, LESC…TPPT, RHSC…SDPG, AVNA…WKKR, and PNEG…SPRD. Residues 588 to 601 are compositionally biased toward low complexity; it reads SVSSLDLEGESVSE. Positions 755–774 are enriched in polar residues; sequence SRPSTPGLSVVSGISATSED. Basic and acidic residues-rich tracts occupy residues 775-786 and 885-897; these read IPNKTEDLRSEC and RHSC…RSRS. 2 stretches are compositionally biased toward low complexity: residues 898–911 and 936–946; these read SDIA…ISDP and PPQSSSFSPSK. The span at 947–968 shows a compositional bias: basic and acidic residues; the sequence is DSSRGEPDEKKDSDDERSDRNK. The 141-residue stretch at 1312–1452 folds into the VPS9 domain; it reads ILRDQVLHEH…EFIKTIDDRK (141 aa).

Belongs to the GAPVD1 family.

The protein localises to the membrane. The protein resides in the endosome. Acts both as a GTPase-activating protein (GAP) and a guanine nucleotide exchange factor (GEF), and participates in various processes such as endocytosis, insulin receptor internalization or LC2A4/GLUT4 trafficking. The protein is GTPase-activating protein and VPS9 domain-containing protein 1 (gapvd1) of Xenopus laevis (African clawed frog).